The primary structure comprises 200 residues: Transcriptional repressor NrdR (200 aa).

A zinc finger spans residues 3–34 (CPRCGKQEIRVLESRSAEGGQSVRRRRECMSC). The region spanning 49–139 (IMVIKRDGSR…VYRKFQGIKD (91 aa)) is the ATP-cone domain. Positions 158 to 200 (LERPLRNSPPSESESTASPDWVGGIPQLLDQNDTSSNLSEIPK) are disordered. Positions 186–200 (LDQNDTSSNLSEIPK) are enriched in polar residues.

The protein belongs to the NrdR family. Zn(2+) is required as a cofactor.

In terms of biological role, negatively regulates transcription of bacterial ribonucleotide reductase nrd genes and operons by binding to NrdR-boxes. This is Transcriptional repressor NrdR from Synechococcus sp. (strain JA-3-3Ab) (Cyanobacteria bacterium Yellowstone A-Prime).